We begin with the raw amino-acid sequence, 654 residues long: Cysteine-rich receptor-like protein kinase 40 (654 aa).

Residues 1–27 (MGKCSALMIFLSSSLLLVLQTLHVVNA) form the signal peptide. Gnk2-homologous domains are found at residues 28 to 131 (VKCF…NQST) and 143 to 250 (WPSP…LYSF). Residues 28–287 (VKCFGNSFNG…VKKGKSIGYG (260 aa)) are Extracellular-facing. N-linked (GlcNAc...) asparagine glycosylation is found at N38, N65, N128, N154, N167, and N256. The chain crosses the membrane as a helical span at residues 288–308 (GIIAIVVVFTFINLLVFIGFI). The Cytoplasmic segment spans residues 309 to 654 (KVYARRGKLN…DDVFTELSCR (346 aa)). The 272-residue stretch at 348–619 (FSSENTLGQG…VIIWLGSETI (272 aa)) folds into the Protein kinase domain. Residues 354–362 (LGQGGFGTV) and K376 contribute to the ATP site. A Phosphotyrosine modification is found at Y421. D473 acts as the Proton acceptor in catalysis. S477 carries the post-translational modification Phosphoserine. Residue T513 is modified to Phosphothreonine. At Y521 the chain carries Phosphotyrosine.

Belongs to the protein kinase superfamily. Ser/Thr protein kinase family. CRK subfamily.

It is found in the membrane. The enzyme catalyses L-seryl-[protein] + ATP = O-phospho-L-seryl-[protein] + ADP + H(+). It catalyses the reaction L-threonyl-[protein] + ATP = O-phospho-L-threonyl-[protein] + ADP + H(+). This Arabidopsis thaliana (Mouse-ear cress) protein is Cysteine-rich receptor-like protein kinase 40 (CRK40).